Consider the following 392-residue polypeptide: Probable tRNA sulfurtransferase (392 aa).

One can recognise a THUMP domain in the interval 59-166 (DEIIERVKKV…ECSFVFTKKV (108 aa)). ATP contacts are provided by residues 183 to 184 (LL), 208 to 209 (HF), arginine 265, glycine 287, and glutamine 296.

Belongs to the ThiI family.

It localises to the cytoplasm. It catalyses the reaction [ThiI sulfur-carrier protein]-S-sulfanyl-L-cysteine + a uridine in tRNA + 2 reduced [2Fe-2S]-[ferredoxin] + ATP + H(+) = [ThiI sulfur-carrier protein]-L-cysteine + a 4-thiouridine in tRNA + 2 oxidized [2Fe-2S]-[ferredoxin] + AMP + diphosphate. It carries out the reaction [ThiS sulfur-carrier protein]-C-terminal Gly-Gly-AMP + S-sulfanyl-L-cysteinyl-[cysteine desulfurase] + AH2 = [ThiS sulfur-carrier protein]-C-terminal-Gly-aminoethanethioate + L-cysteinyl-[cysteine desulfurase] + A + AMP + 2 H(+). It functions in the pathway cofactor biosynthesis; thiamine diphosphate biosynthesis. Its function is as follows. Catalyzes the ATP-dependent transfer of a sulfur to tRNA to produce 4-thiouridine in position 8 of tRNAs, which functions as a near-UV photosensor. Also catalyzes the transfer of sulfur to the sulfur carrier protein ThiS, forming ThiS-thiocarboxylate. This is a step in the synthesis of thiazole, in the thiamine biosynthesis pathway. The sulfur is donated as persulfide by IscS. In Alkaliphilus metalliredigens (strain QYMF), this protein is Probable tRNA sulfurtransferase.